The sequence spans 634 residues: DNA-directed RNA polymerase subunit gamma (634 aa).

Zn(2+) contacts are provided by Cys74, Cys76, Cys89, and Cys92. The Mg(2+) site is built by Asp471, Asp473, and Asp475.

The protein belongs to the RNA polymerase beta' chain family. RpoC1 subfamily. In cyanobacteria the RNAP catalytic core is composed of 2 alpha, 1 beta, 1 beta', 1 gamma and 1 omega subunit. When a sigma factor is associated with the core the holoenzyme is formed, which can initiate transcription. The cofactor is Mg(2+). It depends on Zn(2+) as a cofactor.

It carries out the reaction RNA(n) + a ribonucleoside 5'-triphosphate = RNA(n+1) + diphosphate. DNA-dependent RNA polymerase catalyzes the transcription of DNA into RNA using the four ribonucleoside triphosphates as substrates. The protein is DNA-directed RNA polymerase subunit gamma of Parasynechococcus marenigrum (strain WH8102).